A 332-amino-acid chain; its full sequence is 5-dehydro-2-deoxygluconokinase 2 (332 aa).

This sequence belongs to the carbohydrate kinase PfkB family.

The enzyme catalyses 5-dehydro-2-deoxy-D-gluconate + ATP = 6-phospho-5-dehydro-2-deoxy-D-gluconate + ADP + H(+). It functions in the pathway polyol metabolism; myo-inositol degradation into acetyl-CoA; acetyl-CoA from myo-inositol: step 5/7. In terms of biological role, catalyzes the phosphorylation of 5-dehydro-2-deoxy-D-gluconate (2-deoxy-5-keto-D-gluconate or DKG) to 6-phospho-5-dehydro-2-deoxy-D-gluconate (DKGP). This chain is 5-dehydro-2-deoxygluconokinase 2, found in Bacillus cereus (strain ZK / E33L).